Consider the following 298-residue polypeptide: N-acetylmuramic acid 6-phosphate etherase (298 aa).

In terms of domain architecture, SIS spans isoleucine 55–lysine 218. Glutamate 83 functions as the Proton donor in the catalytic mechanism. The active site involves glutamate 114.

Belongs to the GCKR-like family. MurNAc-6-P etherase subfamily. As to quaternary structure, homodimer.

It catalyses the reaction N-acetyl-D-muramate 6-phosphate + H2O = N-acetyl-D-glucosamine 6-phosphate + (R)-lactate. The protein operates within amino-sugar metabolism; 1,6-anhydro-N-acetylmuramate degradation. It participates in amino-sugar metabolism; N-acetylmuramate degradation. Its pathway is cell wall biogenesis; peptidoglycan recycling. In terms of biological role, specifically catalyzes the cleavage of the D-lactyl ether substituent of MurNAc 6-phosphate, producing GlcNAc 6-phosphate and D-lactate. Together with AnmK, is also required for the utilization of anhydro-N-acetylmuramic acid (anhMurNAc) either imported from the medium or derived from its own cell wall murein, and thus plays a role in cell wall recycling. The protein is N-acetylmuramic acid 6-phosphate etherase of Escherichia coli O157:H7 (strain EC4115 / EHEC).